Here is an 89-residue protein sequence, read N- to C-terminus: Small ribosomal subunit protein uS15 (89 aa).

Belongs to the universal ribosomal protein uS15 family. In terms of assembly, part of the 30S ribosomal subunit. Forms a bridge to the 50S subunit in the 70S ribosome, contacting the 23S rRNA.

Its function is as follows. One of the primary rRNA binding proteins, it binds directly to 16S rRNA where it helps nucleate assembly of the platform of the 30S subunit by binding and bridging several RNA helices of the 16S rRNA. In terms of biological role, forms an intersubunit bridge (bridge B4) with the 23S rRNA of the 50S subunit in the ribosome. The sequence is that of Small ribosomal subunit protein uS15 from Gluconacetobacter diazotrophicus (strain ATCC 49037 / DSM 5601 / CCUG 37298 / CIP 103539 / LMG 7603 / PAl5).